We begin with the raw amino-acid sequence, 188 residues long: Peptidyl-tRNA hydrolase (188 aa).

TRNA is bound at residue tyrosine 14. The Proton acceptor role is filled by histidine 19. TRNA-binding residues include tyrosine 60 and asparagine 62.

It belongs to the PTH family. In terms of assembly, monomer.

It localises to the cytoplasm. It catalyses the reaction an N-acyl-L-alpha-aminoacyl-tRNA + H2O = an N-acyl-L-amino acid + a tRNA + H(+). Its function is as follows. Hydrolyzes ribosome-free peptidyl-tRNAs (with 1 or more amino acids incorporated), which drop off the ribosome during protein synthesis, or as a result of ribosome stalling. Catalyzes the release of premature peptidyl moieties from peptidyl-tRNA molecules trapped in stalled 50S ribosomal subunits, and thus maintains levels of free tRNAs and 50S ribosomes. This chain is Peptidyl-tRNA hydrolase, found in Mycoplasmopsis agalactiae (strain NCTC 10123 / CIP 59.7 / PG2) (Mycoplasma agalactiae).